An 83-amino-acid chain; its full sequence is uncharacterized protein (83 aa).

2 helical membrane-spanning segments follow: residues 23-43 (GGCY…SAIA) and 49-69 (SLWW…VVYG).

The protein resides in the cell membrane. This is an uncharacterized protein from Mycobacterium tuberculosis (strain CDC 1551 / Oshkosh).